The following is a 436-amino-acid chain: Fibrinogen gamma chain (436 aa).

The first 25 residues, 1-25 (MSWSLQPPSFLLCCLLLLFSPTGLA), serve as a signal peptide directing secretion. N-linked (GlcNAc...) asparagine glycosylation is present at Asn77. Residues 169–415 (QIHDTTGKDC…ETTMKIIPFN (247 aa)) enclose the Fibrinogen C-terminal domain. Cysteines 178 and 207 form a disulfide. Ca(2+)-binding residues include Asp343, Asp345, and Gly349. Cys351 and Cys364 are disulfide-bonded. An Isoglutamyl lysine isopeptide (Gln-Lys) (interchain with K-431) cross-link involves residue Gln423. Position 430 is a phosphoserine (Ser430). Residue Lys431 forms an Isoglutamyl lysine isopeptide (Lys-Gln) (interchain with Q-423) linkage.

Heterohexamer; disulfide linked. Contains 2 sets of 3 non-identical chains (alpha, beta and gamma). The 2 heterotrimers are in head to head conformation with the N-termini in a small central domain. Post-translationally, conversion of fibrinogen to fibrin is triggered by thrombin, which cleaves fibrinopeptides A and B from alpha and beta chains, and thus exposes the N-terminal polymerization sites responsible for the formation of the soft clot. The soft clot is converted into the hard clot by factor XIIIA which catalyzes the epsilon-(gamma-glutamyl)lysine cross-linking between gamma chains (stronger) and between alpha chains (weaker) of different monomers.

Its subcellular location is the secreted. Functionally, together with fibrinogen alpha (FGA) and fibrinogen beta (FGB), polymerizes to form an insoluble fibrin matrix. Fibrin has a major function in hemostasis as one of the primary components of blood clots. In addition, functions during the early stages of wound repair to stabilize the lesion and guide cell migration during re-epithelialization. Was originally thought to be essential for platelet aggregation, based on in vitro studies using anticoagulated blood. However, subsequent studies have shown that it is not absolutely required for thrombus formation in vivo. Enhances expression of SELP in activated platelets via an ITGB3-dependent pathway. Maternal fibrinogen is essential for successful pregnancy. Fibrin deposition is also associated with infection, where it protects against IFNG-mediated hemorrhage. May also facilitate the immune response via both innate and T-cell mediated pathways. In Mus musculus (Mouse), this protein is Fibrinogen gamma chain (Fgg).